Here is a 510-residue protein sequence, read N- to C-terminus: UDP-N-acetylmuramyl-tripeptide synthetase (510 aa).

A UDP-N-acetyl-alpha-D-muramoyl-L-alanyl-D-glutamate-binding site is contributed by Ser-36. An ATP-binding site is contributed by 113–119; that stretch reads GTKGKTT. UDP-N-acetyl-alpha-D-muramoyl-L-alanyl-D-glutamate is bound by residues 159–160, Ser-186, and Arg-194; that span reads TT. At Lys-228 the chain carries N6-carboxylysine.

The protein belongs to the MurCDEF family. MurE subfamily. In terms of processing, carboxylation is probably crucial for Mg(2+) binding and, consequently, for the gamma-phosphate positioning of ATP.

The protein resides in the cytoplasm. The protein operates within cell wall biogenesis; peptidoglycan biosynthesis. In terms of biological role, catalyzes the addition of an amino acid to the nucleotide precursor UDP-N-acetylmuramoyl-L-alanyl-D-glutamate (UMAG) in the biosynthesis of bacterial cell-wall peptidoglycan. The sequence is that of UDP-N-acetylmuramyl-tripeptide synthetase from Ligilactobacillus salivarius (strain UCC118) (Lactobacillus salivarius).